Reading from the N-terminus, the 102-residue chain is MTTASSKVAIKPLEDRIVVQPLDAEQTTASGLVIPDTAKEKPQEGVVLAVGPGRFEDGNRLPLDVTVGDVVLYSKYGGTEVKYNGEEYLVLSARDVLAIVEK.

The protein belongs to the GroES chaperonin family. As to quaternary structure, heptamer of 7 subunits arranged in a ring. Interacts with the chaperonin GroEL.

It is found in the cytoplasm. Together with the chaperonin GroEL, plays an essential role in assisting protein folding. The GroEL-GroES system forms a nano-cage that allows encapsulation of the non-native substrate proteins and provides a physical environment optimized to promote and accelerate protein folding. GroES binds to the apical surface of the GroEL ring, thereby capping the opening of the GroEL channel. This chain is Co-chaperonin GroES, found in Streptomyces avermitilis (strain ATCC 31267 / DSM 46492 / JCM 5070 / NBRC 14893 / NCIMB 12804 / NRRL 8165 / MA-4680).